The following is a 112-amino-acid chain: Large ribosomal subunit protein eL30x (112 aa).

This sequence belongs to the eukaryotic ribosomal protein eL30 family.

In Arabidopsis thaliana (Mouse-ear cress), this protein is Large ribosomal subunit protein eL30x (RPL30C).